Here is a 219-residue protein sequence, read N- to C-terminus: Ribose-5-phosphate isomerase A (219 aa).

Residues 28 to 31, 81 to 84, and 94 to 97 each bind substrate; these read SGST, DGAD, and KGGG. Catalysis depends on Glu103, which acts as the Proton acceptor. Lys121 provides a ligand contact to substrate.

Belongs to the ribose 5-phosphate isomerase family. In terms of assembly, homodimer.

It catalyses the reaction aldehydo-D-ribose 5-phosphate = D-ribulose 5-phosphate. It participates in carbohydrate degradation; pentose phosphate pathway; D-ribose 5-phosphate from D-ribulose 5-phosphate (non-oxidative stage): step 1/1. In terms of biological role, catalyzes the reversible conversion of ribose-5-phosphate to ribulose 5-phosphate. This is Ribose-5-phosphate isomerase A from Actinobacillus pleuropneumoniae serotype 3 (strain JL03).